Reading from the N-terminus, the 126-residue chain is Methylglyoxal synthase (126 aa).

The MGS-like domain occupies 1–126 (MEKKIALIAH…LIKGFEGLNT (126 aa)). Residues His10, Lys14, 36 to 39 (TGTT), and 56 to 57 (SG) contribute to the substrate site. The active-site Proton donor/acceptor is the Asp62. Residue His89 coordinates substrate.

This sequence belongs to the methylglyoxal synthase family.

It carries out the reaction dihydroxyacetone phosphate = methylglyoxal + phosphate. In terms of biological role, catalyzes the formation of methylglyoxal from dihydroxyacetone phosphate. This Borrelia garinii subsp. bavariensis (strain ATCC BAA-2496 / DSM 23469 / PBi) (Borreliella bavariensis) protein is Methylglyoxal synthase.